Consider the following 355-residue polypeptide: Syntaxin-5 (355 aa).

The Cytoplasmic portion of the chain corresponds to 1 to 333 (MIPRKRYGSK…KYFQSVTSNR (333 aa)). Positions 28 to 37 (PATAGSSSSD) are enriched in polar residues. The tract at residues 28 to 51 (PATAGSSSSDIAPLPPPVTLVPPP) is disordered. The segment covering 40–51 (PLPPPVTLVPPP) has biased composition (pro residues). The short motif at 245–247 (IDM) is the IxM motif; signal for cargo packaging into COPII-coated vesicles element. The 63-residue stretch at 263–325 (DSYIQSRADT…EAAHSEILKY (63 aa)) folds into the t-SNARE coiled-coil homology domain. The stretch at 287–318 (FQQLAHMVKEQEETIQRIDENVLGAQLDVEAA) forms a coiled coil. The chain crosses the membrane as a helical; Anchor for type IV membrane protein span at residues 334 to 354 (WLMVKIFLILIVFFIIFVVFL). Alanine 355 is a topological domain (vesicular).

It belongs to the syntaxin family. In terms of assembly, part of a ternary complex containing STX5A, NSFL1C and VCP. Identified in a unique SNARE complex composed of the Golgi SNAREs GOSR1, GOSR2, YKT6 and VTI1A. Component of a SNARE complex consisting of STX5, YKT6, GOSR1 and BET1L. Interacts with BET1L. Interacts with BET1. Interacts with COG4. Interacts with GM130/GOLGA2. Interacts (via IxM motif) with SEC24C and SEC24D; mediates STX5 packaging into COPII-coated vesicles. Interacts with VLDLR; this interaction mediates VLDLR translocation from the endoplasmic reticulum to the plasma membrane.

Its subcellular location is the endoplasmic reticulum-Golgi intermediate compartment membrane. The protein resides in the golgi apparatus membrane. In terms of biological role, mediates endoplasmic reticulum to Golgi transport. Together with p115/USO1 and GM130/GOLGA2, involved in vesicle tethering and fusion at the cis-Golgi membrane to maintain the stacked and inter-connected structure of the Golgi apparatus. Required for Golgi to endoplasmic reticulum retrogade transport, and for intra-Golgi transport. Functionally, (Microbial infection) Required for the efficient production of infectious virion during human cytomegalovirus infection. Mechanistically, participates in the formation of the cytoplasmic viral assembly compartment where tegument acquisition and envelopment occur. The chain is Syntaxin-5 (STX5) from Homo sapiens (Human).